The sequence spans 248 residues: 1-(5-phosphoribosyl)-5-[(5-phosphoribosylamino)methylideneamino] imidazole-4-carboxamide isomerase (248 aa).

Residue Asp11 is the Proton acceptor of the active site. Residue Asp132 is the Proton donor of the active site.

Belongs to the HisA/HisF family.

Its subcellular location is the cytoplasm. The catalysed reaction is 1-(5-phospho-beta-D-ribosyl)-5-[(5-phospho-beta-D-ribosylamino)methylideneamino]imidazole-4-carboxamide = 5-[(5-phospho-1-deoxy-D-ribulos-1-ylimino)methylamino]-1-(5-phospho-beta-D-ribosyl)imidazole-4-carboxamide. It functions in the pathway amino-acid biosynthesis; L-histidine biosynthesis; L-histidine from 5-phospho-alpha-D-ribose 1-diphosphate: step 4/9. The sequence is that of 1-(5-phosphoribosyl)-5-[(5-phosphoribosylamino)methylideneamino] imidazole-4-carboxamide isomerase from Bradyrhizobium diazoefficiens (strain JCM 10833 / BCRC 13528 / IAM 13628 / NBRC 14792 / USDA 110).